The chain runs to 177 residues: Probable prophage lysozyme (177 aa).

E35 serves as the catalytic Proton donor. The Nucleophile role is filled by D44.

It belongs to the glycosyl hydrolase 24 family.

The enzyme catalyses Hydrolysis of (1-&gt;4)-beta-linkages between N-acetylmuramic acid and N-acetyl-D-glucosamine residues in a peptidoglycan and between N-acetyl-D-glucosamine residues in chitodextrins.. In terms of biological role, essential for lysis of bacterial cell wall, by showing cell wall hydrolyzing activity. This is Probable prophage lysozyme (rrrQ) from Escherichia coli (strain K12).